The primary structure comprises 265 residues: Beta-lactamase OXA-48 (265 aa).

A signal peptide spans 1 to 22 (MRVLALSAVFLVASIIGMPAVA). Catalysis depends on Ser-70, which acts as the Acyl-ester intermediate. A beta-lactam contacts are provided by Ser-70, Lys-73, Ser-118, and Arg-250. Lys-73 is modified (N6-carboxylysine).

The protein belongs to the class-D beta-lactamase family. Monomer. Dimer. In terms of processing, carboxylated on the epsilon-amino group of a lysine, with the resulting carbamate functional group serving as a general base. Probably N-carboxylated at Lys-73 at neutral pH in vivo and undergoes complete N-decarboxylation, at pH 4.1, in vitro.

It catalyses the reaction a beta-lactam + H2O = a substituted beta-amino acid. With respect to regulation, inhibited by avibactam, related diazabicyclooctane (DBO) derivatives and by bicyclic boronic acids, via a covalent binding to Ser-70. Inhibited by chloride, bromide and iodide ions. Not inhibited by the beta-lactamase-blocking agents, clavulanic acid or tazobactam. Its function is as follows. Class D beta-lactamase which confers resistance to the beta-lactam antibiotics, including amoxicillin, and moderate resistance to cephalosporins and carbapenems such as cephalothin and imipenem; in the DH10B strain of E.coli. Acts via hydrolysis of the beta-lactam ring. Has oxacillin-, cephalothin- and imipenem-hydrolyzing activities. The chain is Beta-lactamase OXA-48 from Klebsiella pneumoniae.